Consider the following 262-residue polypeptide: WUSCHEL-related homeobox 11 (262 aa).

Over residues 1 to 11 (MDGGHSPDRHA) the composition is skewed to basic and acidic residues. 2 disordered regions span residues 1-21 (MDGGHSPDRHAAAAAGEPVRS) and 79-115 (RRRQRQLQAQAQAAAAAASSGSPPTASSGGLAPGHAG). A DNA-binding region (homeobox) is located at residues 18-82 (PVRSRWTPKP…NRRSRSRRRQ (65 aa)). The span at 84-112 (QLQAQAQAAAAAASSGSPPTASSGGLAPG) shows a compositional bias: low complexity.

It belongs to the WUS homeobox family. Interacts with ERF3.

It is found in the nucleus. Functionally, transcription factor which may be involved in developmental processes. Promotes the development of crown roots (both initiation and elongation), main components of the fibrous root system, by regulating the expression of genes required for crown root development and hormone-responsive genes involved in cytokinin (e.g. RR1, RR2, RR3 and RR4) and auxin (e.g. IAA5, IAA11, IAA23 and IAA31) signaling. The sequence is that of WUSCHEL-related homeobox 11 from Oryza sativa subsp. indica (Rice).